Reading from the N-terminus, the 211-residue chain is Protein U63 (211 aa).

It belongs to the herpesviridae UL92 family.

This chain is Protein U63 (U63), found in Human herpesvirus 7 (strain JI) (HHV-7).